Reading from the N-terminus, the 442-residue chain is Methionine aminopeptidase 2 (442 aa).

Residues 1-81 (MAAQAPTEAL…APTAQSDPPR (81 aa)) form a disordered region. Residues 56 to 72 (PLRRRRRRRRTRKKKKA) are compositionally biased toward basic residues. Position 196 (histidine 196) interacts with substrate. Aspartate 216, aspartate 227, and histidine 296 together coordinate a divalent metal cation. Histidine 304 is a binding site for substrate. Positions 329 and 423 each coordinate a divalent metal cation.

The protein belongs to the peptidase M24A family. Methionine aminopeptidase eukaryotic type 2 subfamily. Requires Co(2+) as cofactor. Zn(2+) serves as cofactor. It depends on Mn(2+) as a cofactor. Fe(2+) is required as a cofactor.

It is found in the cytoplasm. The catalysed reaction is Release of N-terminal amino acids, preferentially methionine, from peptides and arylamides.. Its function is as follows. Cotranslationally removes the N-terminal methionine from nascent proteins. The N-terminal methionine is often cleaved when the second residue in the primary sequence is small and uncharged (Met-Ala-, Cys, Gly, Pro, Ser, Thr, or Val). This is Methionine aminopeptidase 2 from Verticillium alfalfae (strain VaMs.102 / ATCC MYA-4576 / FGSC 10136) (Verticillium wilt of alfalfa).